Reading from the N-terminus, the 337-residue chain is Aspartate-semialdehyde dehydrogenase 2 (337 aa).

NADP(+) contacts are provided by residues 13-16 (TGAV) and 41-42 (RS). Arg101 contacts phosphate. Cys132 (acyl-thioester intermediate) is an active-site residue. Substrate is bound at residue Gln159. An NADP(+)-binding site is contributed by 162–163 (SG). Lys216 contributes to the phosphate binding site. Arg238 is a binding site for substrate. His245 (proton acceptor) is an active-site residue. Asn316 contributes to the NADP(+) binding site.

It belongs to the aspartate-semialdehyde dehydrogenase family. In terms of assembly, homodimer.

The catalysed reaction is L-aspartate 4-semialdehyde + phosphate + NADP(+) = 4-phospho-L-aspartate + NADPH + H(+). The protein operates within amino-acid biosynthesis; L-lysine biosynthesis via DAP pathway; (S)-tetrahydrodipicolinate from L-aspartate: step 2/4. Its pathway is amino-acid biosynthesis; L-methionine biosynthesis via de novo pathway; L-homoserine from L-aspartate: step 2/3. It participates in amino-acid biosynthesis; L-threonine biosynthesis; L-threonine from L-aspartate: step 2/5. Functionally, catalyzes the NADPH-dependent formation of L-aspartate-semialdehyde (L-ASA) by the reductive dephosphorylation of L-aspartyl-4-phosphate. This is Aspartate-semialdehyde dehydrogenase 2 (asd2) from Vibrio cholerae serotype O1 (strain ATCC 39315 / El Tor Inaba N16961).